Consider the following 259-residue polypeptide: DNA-directed RNA polymerase subunit Rpo3 (259 aa).

This sequence belongs to the archaeal Rpo3/eukaryotic RPB3 RNA polymerase subunit family. In terms of assembly, part of the RNA polymerase complex.

Its subcellular location is the cytoplasm. It carries out the reaction RNA(n) + a ribonucleoside 5'-triphosphate = RNA(n+1) + diphosphate. DNA-dependent RNA polymerase (RNAP) catalyzes the transcription of DNA into RNA using the four ribonucleoside triphosphates as substrates. This chain is DNA-directed RNA polymerase subunit Rpo3, found in Thermococcus kodakarensis (strain ATCC BAA-918 / JCM 12380 / KOD1) (Pyrococcus kodakaraensis (strain KOD1)).